A 396-amino-acid chain; its full sequence is MAVRIKLKPGREKSLERRHPWVFSNGIHNVKGKPEAGETVDVVAHDGHWLGRGAWSPESQIQVRIWTFDREEEIDREFFKRRILRAQAGRDDLIREQGLTGYRLIAAESDGLPGITIDKYANVLVCQLLSMGADVWRDTIVDVLAELYPDCAIYERSDVDSRKKEGLASTMGLLHGTLPEMPVIIEENGIKIAVDVTKGHKTGFYLDQRDNRAMAARFVKGKSVLNCFCYTGTFGLYAANAGAASIENVDVSALALDTARLNMRVNGLNDDNVHYNEADVFKLLRQYRDEGKTFDVIVLDPPKFADNKSQLNGACRGYKDINMIALQLLNPGGVLLTFSCSGLMPADLFQKIVADAALDAKREIQFIERLSQASDHPIGSAFPEGFYLKGLVARVW.

The 78-residue stretch at 2–79 (AVRIKLKPGR…REEEIDREFF (78 aa)) folds into the PUA domain.

Belongs to the methyltransferase superfamily. RlmI family.

Its subcellular location is the cytoplasm. The catalysed reaction is cytidine(1962) in 23S rRNA + S-adenosyl-L-methionine = 5-methylcytidine(1962) in 23S rRNA + S-adenosyl-L-homocysteine + H(+). In terms of biological role, specifically methylates the cytosine at position 1962 (m5C1962) of 23S rRNA. The chain is Ribosomal RNA large subunit methyltransferase I from Shewanella sp. (strain ANA-3).